Here is a 240-residue protein sequence, read N- to C-terminus: Ubiquinone biosynthesis O-methyltransferase (240 aa).

Residues arginine 44, glycine 64, aspartate 85, and methionine 129 each contribute to the S-adenosyl-L-methionine site.

It belongs to the methyltransferase superfamily. UbiG/COQ3 family.

It catalyses the reaction a 3-demethylubiquinol + S-adenosyl-L-methionine = a ubiquinol + S-adenosyl-L-homocysteine + H(+). It carries out the reaction a 3-(all-trans-polyprenyl)benzene-1,2-diol + S-adenosyl-L-methionine = a 2-methoxy-6-(all-trans-polyprenyl)phenol + S-adenosyl-L-homocysteine + H(+). It functions in the pathway cofactor biosynthesis; ubiquinone biosynthesis. Functionally, O-methyltransferase that catalyzes the 2 O-methylation steps in the ubiquinone biosynthetic pathway. This chain is Ubiquinone biosynthesis O-methyltransferase, found in Escherichia coli (strain UTI89 / UPEC).